The chain runs to 1053 residues: Phosphoenolpyruvate carboxylase (1053 aa).

The active site involves histidine 246. Over residues 461 to 473 the composition is skewed to basic and acidic residues; it reads RNTRLQQQQEKDP. A disordered region spans residues 461–480; sequence RNTRLQQQQEKDPTTPLPEY. The active site involves lysine 699.

It belongs to the PEPCase type 1 family. Mg(2+) serves as cofactor.

The enzyme catalyses oxaloacetate + phosphate = phosphoenolpyruvate + hydrogencarbonate. Its function is as follows. Forms oxaloacetate, a four-carbon dicarboxylic acid source for the tricarboxylic acid cycle. This Synechococcus sp. (strain ATCC 27144 / PCC 6301 / SAUG 1402/1) (Anacystis nidulans) protein is Phosphoenolpyruvate carboxylase (ppc).